The following is a 445-amino-acid chain: Phosphoglucosamine mutase (445 aa).

The active-site Phosphoserine intermediate is Ser99. 4 residues coordinate Mg(2+): Ser99, Asp242, Asp244, and Asp246. Phosphoserine is present on Ser99.

The protein belongs to the phosphohexose mutase family. The cofactor is Mg(2+). In terms of processing, activated by phosphorylation.

It catalyses the reaction alpha-D-glucosamine 1-phosphate = D-glucosamine 6-phosphate. Catalyzes the conversion of glucosamine-6-phosphate to glucosamine-1-phosphate. The chain is Phosphoglucosamine mutase from Helicobacter acinonychis (strain Sheeba).